Here is a 1149-residue protein sequence, read N- to C-terminus: DNA-directed RNA polymerase III subunit RPC2 (1149 aa).

Residues Cys1095, Cys1098, Cys1107, and Cys1110 each coordinate Zn(2+). The segment at 1095 to 1110 adopts a C4-type zinc-finger fold; sequence CDKCGLMGYSGWCTTC.

It belongs to the RNA polymerase beta chain family. Component of the RNA polymerase III (Pol III) complex consisting of 17 subunits.

It is found in the nucleus. It carries out the reaction RNA(n) + a ribonucleoside 5'-triphosphate = RNA(n+1) + diphosphate. Its function is as follows. DNA-dependent RNA polymerase catalyzes the transcription of DNA into RNA using the four ribonucleoside triphosphates as substrates. Second largest core component of RNA polymerase III which synthesizes small RNAs, such as 5S rRNA and tRNAs. Proposed to contribute to the polymerase catalytic activity and forms the polymerase active center together with the largest subunit. Pol III is composed of mobile elements and RPC2 is part of the core element with the central large cleft and probably a clamp element that moves to open and close the cleft. The protein is DNA-directed RNA polymerase III subunit RPC2 (RET1) of Saccharomyces cerevisiae (strain ATCC 204508 / S288c) (Baker's yeast).